The primary structure comprises 313 residues: tRNA dimethylallyltransferase (313 aa).

11–18 (GPTASGKT) serves as a coordination point for ATP. 13-18 (TASGKT) contributes to the substrate binding site. Interaction with substrate tRNA regions lie at residues 36–39 (DSRQ) and 160–164 (QRLIR).

This sequence belongs to the IPP transferase family. Monomer. It depends on Mg(2+) as a cofactor.

The enzyme catalyses adenosine(37) in tRNA + dimethylallyl diphosphate = N(6)-dimethylallyladenosine(37) in tRNA + diphosphate. In terms of biological role, catalyzes the transfer of a dimethylallyl group onto the adenine at position 37 in tRNAs that read codons beginning with uridine, leading to the formation of N6-(dimethylallyl)adenosine (i(6)A). The sequence is that of tRNA dimethylallyltransferase from Chlorobaculum parvum (strain DSM 263 / NCIMB 8327) (Chlorobium vibrioforme subsp. thiosulfatophilum).